The primary structure comprises 533 residues: Capsid protein VP1 (533 aa).

Residues 333-353 are disordered; that stretch reads TIDLQQNPVPQTSSSTTDSPQ.

Belongs to the microviridae F protein family.

The protein localises to the virion. It localises to the host cytoplasm. In terms of biological role, assembles to form an icosahedral capsid with a T=1 symmetry. The protein is Capsid protein VP1 of Bdellovibrio bacteriovorus (Bacteriophage phiMH2K).